We begin with the raw amino-acid sequence, 228 residues long: Phosphoribosylformylglycinamidine synthase subunit PurQ (228 aa).

The region spanning 3 to 226 (FAVVVFPGSN…VTYWRDAHVV (224 aa)) is the Glutamine amidotransferase type-1 domain. The active-site Nucleophile is Cys-86. Residues His-195 and Glu-197 contribute to the active site.

In terms of assembly, part of the FGAM synthase complex composed of 1 PurL, 1 PurQ and 2 PurS subunits.

Its subcellular location is the cytoplasm. It carries out the reaction N(2)-formyl-N(1)-(5-phospho-beta-D-ribosyl)glycinamide + L-glutamine + ATP + H2O = 2-formamido-N(1)-(5-O-phospho-beta-D-ribosyl)acetamidine + L-glutamate + ADP + phosphate + H(+). It catalyses the reaction L-glutamine + H2O = L-glutamate + NH4(+). Its pathway is purine metabolism; IMP biosynthesis via de novo pathway; 5-amino-1-(5-phospho-D-ribosyl)imidazole from N(2)-formyl-N(1)-(5-phospho-D-ribosyl)glycinamide: step 1/2. In terms of biological role, part of the phosphoribosylformylglycinamidine synthase complex involved in the purines biosynthetic pathway. Catalyzes the ATP-dependent conversion of formylglycinamide ribonucleotide (FGAR) and glutamine to yield formylglycinamidine ribonucleotide (FGAM) and glutamate. The FGAM synthase complex is composed of three subunits. PurQ produces an ammonia molecule by converting glutamine to glutamate. PurL transfers the ammonia molecule to FGAR to form FGAM in an ATP-dependent manner. PurS interacts with PurQ and PurL and is thought to assist in the transfer of the ammonia molecule from PurQ to PurL. This Anoxybacillus flavithermus (strain DSM 21510 / WK1) protein is Phosphoribosylformylglycinamidine synthase subunit PurQ.